The following is a 322-amino-acid chain: ATP-dependent 6-phosphofructokinase (322 aa).

Position 11 (Gly11) interacts with ATP. 21–25 provides a ligand contact to ADP; the sequence is RAVVR. ATP-binding positions include 72–73 and 102–105; these read RC and GDGS. Residue Asp103 participates in Mg(2+) binding. 127–129 contributes to the substrate binding site; sequence TID. Asp129 acts as the Proton acceptor in catalysis. Arg156 serves as a coordination point for ADP. Residues Arg164 and 171–173 contribute to the substrate site; that span reads MGR. ADP contacts are provided by residues 187–189, Arg213, and 215–217; these read GAE and KKH. Substrate contacts are provided by residues Glu224, Arg245, and 251-254; that span reads HIQR.

Belongs to the phosphofructokinase type A (PFKA) family. ATP-dependent PFK group I subfamily. Prokaryotic clade 'B1' sub-subfamily. In terms of assembly, homotetramer. Requires Mg(2+) as cofactor.

The protein resides in the cytoplasm. The enzyme catalyses beta-D-fructose 6-phosphate + ATP = beta-D-fructose 1,6-bisphosphate + ADP + H(+). Its pathway is carbohydrate degradation; glycolysis; D-glyceraldehyde 3-phosphate and glycerone phosphate from D-glucose: step 3/4. With respect to regulation, allosterically activated by ADP and other diphosphonucleosides, and allosterically inhibited by phosphoenolpyruvate. In terms of biological role, catalyzes the phosphorylation of D-fructose 6-phosphate to fructose 1,6-bisphosphate by ATP, the first committing step of glycolysis. This is ATP-dependent 6-phosphofructokinase from Staphylococcus carnosus (strain TM300).